A 79-amino-acid polypeptide reads, in one-letter code: Protein Vpu (79 aa).

Over 1–7 (MLLLIKL) the chain is Extracellular. A helical membrane pass occupies residues 8–28 (GFIGLAIETLIVIVVWAIVYR). The Cytoplasmic segment spans residues 29-79 (IYREVKVEEKISQLRQRIRDRAEDSGNESDGDAEELANLLPPDRIDQDNWV). The segment at 48 to 79 (DRAEDSGNESDGDAEELANLLPPDRIDQDNWV) is disordered. A phosphoserine; by host CK2 mark is found at serine 53 and serine 57. The span at 53-63 (SGNESDGDAEE) shows a compositional bias: acidic residues.

It belongs to the HIV-1 VPU protein family. Homopentamer. Interacts with host CD4 and BRTC; these interactions induce proteasomal degradation of CD4. Interacts with host BST2; this interaction leads to the degradation of host BST2. Interacts with host FBXW11. Interacts with host AP1M1; this interaction plays a role in the mistrafficking and subsequent degradation of host BST2. Interacts with host RANBP2; this interaction allows Vpu to down-regulate host BLM sumoylation. In terms of processing, phosphorylated by host CK2. This phosphorylation is necessary for interaction with human BTRC and degradation of CD4.

It is found in the host membrane. Its activity is regulated as follows. Ion channel activity is inhibited by hexamethylene amiloride in vitro. In terms of biological role, enhances virion budding by targeting host CD4 and Tetherin/BST2 to proteasome degradation. Degradation of CD4 prevents any unwanted premature interactions between viral Env and its host receptor CD4 in the endoplasmic reticulum. Degradation of antiretroviral protein Tetherin/BST2 is important for virion budding, as BST2 tethers new viral particles to the host cell membrane. Mechanistically, Vpu bridges either CD4 or BST2 to BTRC, a substrate recognition subunit of the Skp1/Cullin/F-box protein E3 ubiquitin ligase, induces their ubiquitination and subsequent proteasomal degradation. The alteration of the E3 ligase specificity by Vpu seems to promote the degradation of host IKBKB, leading to NF-kappa-B down-regulation and subsequent apoptosis. Acts as a viroporin that forms an oligomeric ion channel in membranes. Modulates the host DNA repair mechanisms to promote degradation of nuclear viral cDNA in cells that are already productively infected in order to suppress immune sensing and proviral hyper-integration (superinfection). Manipulates PML-NBs and modulates SUMOylation of host BLM protein thereby enhancing its DNA-end processing activity toward viral unintegrated linear DNA. Also inhibits RAD52-mediated homologous repair of viral cDNA, preventing the generation of dead-end circular forms of single copies of the long terminal repeat and permitting sustained nucleolytic attack. The sequence is that of Protein Vpu from Pan troglodytes (Chimpanzee).